The chain runs to 483 residues: Cysteine--tRNA ligase (483 aa).

C28 contacts Zn(2+). The 'HIGH' region signature appears at M30 to H40. 3 residues coordinate Zn(2+): C212, H237, and E241. Positions K269–S273 match the 'KMSKS' region motif. K272 is a binding site for ATP.

This sequence belongs to the class-I aminoacyl-tRNA synthetase family. As to quaternary structure, monomer. Zn(2+) is required as a cofactor.

It localises to the cytoplasm. It carries out the reaction tRNA(Cys) + L-cysteine + ATP = L-cysteinyl-tRNA(Cys) + AMP + diphosphate. This is Cysteine--tRNA ligase from Bordetella avium (strain 197N).